A 75-amino-acid chain; its full sequence is Small ribosomal subunit protein bS16 (75 aa).

It belongs to the bacterial ribosomal protein bS16 family.

The polypeptide is Small ribosomal subunit protein bS16 (Aliarcobacter butzleri (strain RM4018) (Arcobacter butzleri)).